We begin with the raw amino-acid sequence, 298 residues long: Oxygen-dependent coproporphyrinogen-III oxidase (298 aa).

Position 90 (Ser90) interacts with substrate. Residues His94 and His104 each contribute to the a divalent metal cation site. His104 serves as the catalytic Proton donor. Substrate is bound at residue 106–108; sequence NVR. A divalent metal cation is bound by residues His143 and His173. The segment at 238–273 is important for dimerization; the sequence is YVEFNLVWDRGTLFGLQSGGRTESILMSLPPIVKWR. A substrate-binding site is contributed by 256–258; that stretch reads GGR.

It belongs to the aerobic coproporphyrinogen-III oxidase family. In terms of assembly, homodimer. It depends on a divalent metal cation as a cofactor.

It localises to the cytoplasm. The catalysed reaction is coproporphyrinogen III + O2 + 2 H(+) = protoporphyrinogen IX + 2 CO2 + 2 H2O. It participates in porphyrin-containing compound metabolism; protoporphyrin-IX biosynthesis; protoporphyrinogen-IX from coproporphyrinogen-III (O2 route): step 1/1. Involved in the heme biosynthesis. Catalyzes the aerobic oxidative decarboxylation of propionate groups of rings A and B of coproporphyrinogen-III to yield the vinyl groups in protoporphyrinogen-IX. This chain is Oxygen-dependent coproporphyrinogen-III oxidase, found in Dechloromonas aromatica (strain RCB).